The following is a 502-amino-acid chain: 4,4'-diapophytoene desaturase (4,4'-diaponeurosporene-forming) (502 aa).

5–17 contributes to the FAD binding site; it reads VIGAGVTGLAAAA.

This sequence belongs to the carotenoid/retinoid oxidoreductase family. CrtN subfamily.

It carries out the reaction 15-cis-4,4'-diapophytoene + 3 FAD + 3 H(+) = all-trans-4,4'-diaponeurosporene + 3 FADH2. It participates in carotenoid biosynthesis; staphyloxanthin biosynthesis; staphyloxanthin from farnesyl diphosphate: step 2/5. Functionally, involved in the biosynthesis of the yellow-orange carotenoid staphyloxanthin, which plays a role in the virulence via its protective function against oxidative stress. Catalyzes three successive dehydrogenation reactions that lead to the introduction of three double bonds into 4,4'-diapophytoene (dehydrosqualene), with 4,4'-diapophytofluene and 4,4'-diapo-zeta-carotene as intermediates, and 4,4'-diaponeurosporene (the major deep-yellow pigment in staphylococci strains) as the end product. This chain is 4,4'-diapophytoene desaturase (4,4'-diaponeurosporene-forming), found in Staphylococcus aureus (strain COL).